An 89-amino-acid chain; its full sequence is Small ribosomal subunit protein uS14 (89 aa).

The protein belongs to the universal ribosomal protein uS14 family. As to quaternary structure, part of the 30S ribosomal subunit. Contacts proteins S3 and S10.

Its function is as follows. Binds 16S rRNA, required for the assembly of 30S particles and may also be responsible for determining the conformation of the 16S rRNA at the A site. This Chlorobaculum parvum (strain DSM 263 / NCIMB 8327) (Chlorobium vibrioforme subsp. thiosulfatophilum) protein is Small ribosomal subunit protein uS14.